The chain runs to 267 residues: Large ribosomal subunit protein bL9m (267 aa).

The N-terminal 52 residues, 1 to 52 (MAAPVVTAPGRALLRAGAGRLLRGGVQELLRPRHEGNAPDLACNFSLSQNRG), are a transit peptide targeting the mitochondrion.

This sequence belongs to the bacterial ribosomal protein bL9 family. Component of the mitochondrial large ribosomal subunit (mt-LSU). Mature mammalian 55S mitochondrial ribosomes consist of a small (28S) and a large (39S) subunit. The 28S small subunit contains a 12S ribosomal RNA (12S mt-rRNA) and 30 different proteins. The 39S large subunit contains a 16S rRNA (16S mt-rRNA), a copy of mitochondrial valine transfer RNA (mt-tRNA(Val)), which plays an integral structural role, and 52 different proteins.

The protein resides in the mitochondrion. This Homo sapiens (Human) protein is Large ribosomal subunit protein bL9m (MRPL9).